Here is a 211-residue protein sequence, read N- to C-terminus: tRNA (guanine-N(7)-)-methyltransferase (211 aa).

S-adenosyl-L-methionine contacts are provided by Glu44, Asp69, Asp96, and Asp118. The active site involves Asp118. Lys122 contacts substrate. An interaction with RNA region spans residues 124–129 (RHEKRR). Substrate contacts are provided by residues Asp154 and 191-194 (TEYE).

This sequence belongs to the class I-like SAM-binding methyltransferase superfamily. TrmB family.

The enzyme catalyses guanosine(46) in tRNA + S-adenosyl-L-methionine = N(7)-methylguanosine(46) in tRNA + S-adenosyl-L-homocysteine. It participates in tRNA modification; N(7)-methylguanine-tRNA biosynthesis. In terms of biological role, catalyzes the formation of N(7)-methylguanine at position 46 (m7G46) in tRNA. The polypeptide is tRNA (guanine-N(7)-)-methyltransferase (Streptococcus pneumoniae (strain JJA)).